The primary structure comprises 58 residues: uncharacterized protein (58 aa).

This is an uncharacterized protein from Sinorhizobium fredii (strain NBRC 101917 / NGR234).